A 1142-amino-acid chain; its full sequence is Melanoma-associated antigen C1 (1142 aa).

A disordered region spans residues 1–132 (MGDKDMPTAG…DVQSPLQNPA (132 aa)). Low complexity predominate over residues 13 to 42 (SLLQSSSESPQSCPEGEDSQSPLQIPQSSP). Ser63 is subject to Phosphoserine. A compositionally biased stretch (low complexity) spans 76 to 87 (SQSPLQIPQSSP). Residues 92–103 (TQSPLQNSQSSP) show a composition bias toward polar residues. A phosphoserine mark is found at Ser207 and Ser382. 2 disordered regions span residues 502 to 778 (TQST…LQRP) and 791 to 893 (LQSS…SLTD). Polar residues predominate over residues 614–626 (SPLQGEEFQSSLQ). Low complexity predominate over residues 627–659 (SPVSICSSSTPSSLPQSFPESSQSPPEGPVQSP). Residues 671-680 (HSQSPLQSPE) are compositionally biased toward polar residues. 2 stretches are compositionally biased toward low complexity: residues 741–762 (QSPV…FPES) and 807–889 (QSPL…LESD). The MAGE domain occupies 908-1106 (LDEKVDELAR…ITFPSSYKDA (199 aa)). Residue Ser1063 is modified to Phosphoserine. The interval 1118–1142 (IDTTDDSTATESASSSVMSPSFSSE) is disordered. Over residues 1123–1142 (DSTATESASSSVMSPSFSSE) the composition is skewed to low complexity.

As to expression, expressed in testis and in tumors of a wide variety of histologic types.

Its subcellular location is the cytoplasm. The chain is Melanoma-associated antigen C1 (MAGEC1) from Homo sapiens (Human).